The sequence spans 273 residues: Shikimate dehydrogenase (NADP(+)) (273 aa).

Shikimate is bound by residues 15-17 and threonine 62; that span reads SKS. Residue lysine 66 is the Proton acceptor of the active site. Aspartate 78 contacts NADP(+). The shikimate site is built by asparagine 87 and aspartate 103. Residues 127 to 131, 150 to 155, alanine 218, and glycine 238 contribute to the NADP(+) site; these read GAGGA and NRTHTR.

Belongs to the shikimate dehydrogenase family. In terms of assembly, homodimer.

It catalyses the reaction shikimate + NADP(+) = 3-dehydroshikimate + NADPH + H(+). It participates in metabolic intermediate biosynthesis; chorismate biosynthesis; chorismate from D-erythrose 4-phosphate and phosphoenolpyruvate: step 4/7. Involved in the biosynthesis of the chorismate, which leads to the biosynthesis of aromatic amino acids. Catalyzes the reversible NADPH linked reduction of 3-dehydroshikimate (DHSA) to yield shikimate (SA). The chain is Shikimate dehydrogenase (NADP(+)) from Yersinia pseudotuberculosis serotype O:1b (strain IP 31758).